A 224-amino-acid chain; its full sequence is Holliday junction branch migration complex subunit RuvA (224 aa).

The domain I stretch occupies residues 1–67; the sequence is MISWLKGEKV…EDGTSLYGFI (67 aa). A domain II region spans residues 68–146; it reads EVNQRDLFRE…RFTDNDKTIH (79 aa). Positions 147–157 are flexible linker; that stretch reads ENKNDIEANQF. Positions 157–224 are domain III; sequence FSKYIDEIYL…ILMKLSEKST (68 aa).

The protein belongs to the RuvA family. In terms of assembly, homotetramer. Forms an RuvA(8)-RuvB(12)-Holliday junction (HJ) complex. HJ DNA is sandwiched between 2 RuvA tetramers; dsDNA enters through RuvA and exits via RuvB. An RuvB hexamer assembles on each DNA strand where it exits the tetramer. Each RuvB hexamer is contacted by two RuvA subunits (via domain III) on 2 adjacent RuvB subunits; this complex drives branch migration. In the full resolvosome a probable DNA-RuvA(4)-RuvB(12)-RuvC(2) complex forms which resolves the HJ.

The protein localises to the cytoplasm. Its function is as follows. The RuvA-RuvB-RuvC complex processes Holliday junction (HJ) DNA during genetic recombination and DNA repair, while the RuvA-RuvB complex plays an important role in the rescue of blocked DNA replication forks via replication fork reversal (RFR). RuvA specifically binds to HJ cruciform DNA, conferring on it an open structure. The RuvB hexamer acts as an ATP-dependent pump, pulling dsDNA into and through the RuvAB complex. HJ branch migration allows RuvC to scan DNA until it finds its consensus sequence, where it cleaves and resolves the cruciform DNA. The sequence is that of Holliday junction branch migration complex subunit RuvA from Prochlorococcus marinus (strain NATL2A).